Consider the following 281-residue polypeptide: sn-glycerol-3-phosphate transport system permease protein UgpE (281 aa).

6 helical membrane-spanning segments follow: residues 16–36 (LILG…AATL), 85–105 (FSIT…IVWF), 113–133 (FFWM…FPTV), 142–162 (LDSY…TFLF), 202–222 (ALFV…LLII), and 247–267 (WNSV…IVLV). The region spanning 77-268 (LLNSFVMAFS…IPPVVIVLVM (192 aa)) is the ABC transmembrane type-1 domain.

Belongs to the binding-protein-dependent transport system permease family. UgpAE subfamily. In terms of assembly, the complex is composed of two ATP-binding proteins (UgpC), two transmembrane proteins (UgpA and UgpE) and a solute-binding protein (UgpB).

The protein resides in the cell inner membrane. Its function is as follows. Part of the ABC transporter complex UgpBAEC involved in sn-glycerol-3-phosphate (G3P) import. Probably responsible for the translocation of the substrate across the membrane. In Escherichia coli O6:K15:H31 (strain 536 / UPEC), this protein is sn-glycerol-3-phosphate transport system permease protein UgpE (ugpE).